The sequence spans 259 residues: Ribosomal RNA small subunit methyltransferase A (259 aa).

S-adenosyl-L-methionine contacts are provided by Asn-15, Leu-17, Gly-41, Glu-62, Asp-86, and Asn-105.

This sequence belongs to the class I-like SAM-binding methyltransferase superfamily. rRNA adenine N(6)-methyltransferase family. RsmA subfamily.

It is found in the cytoplasm. The enzyme catalyses adenosine(1518)/adenosine(1519) in 16S rRNA + 4 S-adenosyl-L-methionine = N(6)-dimethyladenosine(1518)/N(6)-dimethyladenosine(1519) in 16S rRNA + 4 S-adenosyl-L-homocysteine + 4 H(+). Specifically dimethylates two adjacent adenosines (A1518 and A1519) in the loop of a conserved hairpin near the 3'-end of 16S rRNA in the 30S particle. May play a critical role in biogenesis of 30S subunits. The protein is Ribosomal RNA small subunit methyltransferase A of Mycoplasmopsis synoviae (strain 53) (Mycoplasma synoviae).